Consider the following 290-residue polypeptide: Appressorium protein ROW2 (290 aa).

The first 19 residues, 1 to 19 (MFTKSVFIALVAGVLGVTA), serve as a signal peptide directing secretion. The interval 266 to 290 (AIKTPSKRSVMATHVKRSPEWEEEP) is disordered.

It is found in the secreted. Its subcellular location is the nucleus. Its function is as follows. Plays a role in the formation of the appressorium, a specialized infection structure with the purpose of penetrating the host surface, and is required for proper remodeling of the appressorium wall and vesicle secretion. This is Appressorium protein ROW2 from Mycosarcoma maydis (Corn smut fungus).